A 96-amino-acid polypeptide reads, in one-letter code: (4S)-4-hydroxy-5-phosphonooxypentane-2,3-dione isomerase (96 aa).

An ABM domain is found at 2 to 91 (HVTLVEINVH…MTGPRTKKVF (90 aa)).

The protein belongs to the LsrG family. As to quaternary structure, homodimer.

The protein resides in the cytoplasm. The enzyme catalyses (2S)-2-hydroxy-3,4-dioxopentyl phosphate = 3-hydroxy-2,4-dioxopentyl phosphate. In terms of biological role, involved in the degradation of phospho-AI-2, thereby terminating induction of the lsr operon and closing the AI-2 signaling cycle. Catalyzes the conversion of (4S)-4-hydroxy-5-phosphonooxypentane-2,3-dione (P-DPD) to 3-hydroxy-5-phosphonooxypentane-2,4-dione (P-HPD). The chain is (4S)-4-hydroxy-5-phosphonooxypentane-2,3-dione isomerase from Salmonella choleraesuis (strain SC-B67).